The sequence spans 108 residues: Ig light chain C region (108 aa).

The region spanning 7–102 (PTVSIYCPSL…LTPALAKSFQ (96 aa)) is the Ig-like domain. 2 cysteine pairs are disulfide-bonded: C13-C106 and C28-C86.

This chain is Ig light chain C region, found in Aquarana catesbeiana (American bullfrog).